We begin with the raw amino-acid sequence, 168 residues long: 2-C-methyl-D-erythritol 2,4-cyclodiphosphate synthase (168 aa).

Residues Asp11 and His13 each contribute to the a divalent metal cation site. 4-CDP-2-C-methyl-D-erythritol 2-phosphate contacts are provided by residues 11-13 (DVH) and 38-39 (HS). Position 46 (His46) interacts with a divalent metal cation. 4-CDP-2-C-methyl-D-erythritol 2-phosphate contacts are provided by residues 60 to 62 (DIG), 133 to 136 (TTTD), Phe140, and Arg143.

This sequence belongs to the IspF family. In terms of assembly, homotrimer. Requires a divalent metal cation as cofactor.

The catalysed reaction is 4-CDP-2-C-methyl-D-erythritol 2-phosphate = 2-C-methyl-D-erythritol 2,4-cyclic diphosphate + CMP. It participates in isoprenoid biosynthesis; isopentenyl diphosphate biosynthesis via DXP pathway; isopentenyl diphosphate from 1-deoxy-D-xylulose 5-phosphate: step 4/6. Involved in the biosynthesis of isopentenyl diphosphate (IPP) and dimethylallyl diphosphate (DMAPP), two major building blocks of isoprenoid compounds. Catalyzes the conversion of 4-diphosphocytidyl-2-C-methyl-D-erythritol 2-phosphate (CDP-ME2P) to 2-C-methyl-D-erythritol 2,4-cyclodiphosphate (ME-CPP) with a corresponding release of cytidine 5-monophosphate (CMP). The protein is 2-C-methyl-D-erythritol 2,4-cyclodiphosphate synthase of Cutibacterium acnes (strain DSM 16379 / KPA171202) (Propionibacterium acnes).